A 385-amino-acid polypeptide reads, in one-letter code: Ribosomal RNA large subunit methyltransferase G (385 aa).

The protein belongs to the methyltransferase superfamily. RlmG family.

It localises to the cytoplasm. It catalyses the reaction guanosine(1835) in 23S rRNA + S-adenosyl-L-methionine = N(2)-methylguanosine(1835) in 23S rRNA + S-adenosyl-L-homocysteine + H(+). Functionally, specifically methylates the guanine in position 1835 (m2G1835) of 23S rRNA. In Vibrio parahaemolyticus serotype O3:K6 (strain RIMD 2210633), this protein is Ribosomal RNA large subunit methyltransferase G.